The sequence spans 209 residues: Glutathione S-transferase (209 aa).

The GST N-terminal domain maps to 7–91 (FFFFFFFFFS…YLSKKYNISG (85 aa)). Residues 62–63 (QV), 75–76 (QS), Asp-109, Lys-121, and Thr-125 contribute to the glutathione site. Residues 93 to 209 (GELNEFYADM…YIANRKESVY (117 aa)) enclose the GST C-terminal domain.

It belongs to the GST superfamily. In terms of assembly, homodimer. In the absence of ligands two homodimers may interact to form a tetramer.

It catalyses the reaction RX + glutathione = an S-substituted glutathione + a halide anion + H(+). Functionally, conjugation of reduced glutathione to a wide number of exogenous and endogenous hydrophobic electrophiles. May also function as a storage protein or ligandin for parasitotoxic ferriprotoporphyrin IX (hemin). This chain is Glutathione S-transferase, found in Plasmodium yoelii yoelii.